The primary structure comprises 387 residues: 3-ketoacyl-CoA thiolase (387 aa).

The Acyl-thioester intermediate role is filled by C91. Active-site proton acceptor residues include H343 and C373.

The protein belongs to the thiolase-like superfamily. Thiolase family. Heterotetramer of two alpha chains (FadB) and two beta chains (FadA).

It localises to the cytoplasm. The enzyme catalyses an acyl-CoA + acetyl-CoA = a 3-oxoacyl-CoA + CoA. It functions in the pathway lipid metabolism; fatty acid beta-oxidation. In terms of biological role, catalyzes the final step of fatty acid oxidation in which acetyl-CoA is released and the CoA ester of a fatty acid two carbons shorter is formed. The sequence is that of 3-ketoacyl-CoA thiolase from Shigella dysenteriae serotype 1 (strain Sd197).